A 290-amino-acid chain; its full sequence is Inner membrane protein YebZ (290 aa).

The Periplasmic portion of the chain corresponds to 1-10 (MLAFTWIALR). A helical membrane pass occupies residues 11–31 (FIHFTSLMLVFGFAMYGAWLA). Over 32 to 49 (PLTIRRLLAKRFLRLQQH) the chain is Cytoplasmic. A helical transmembrane segment spans residues 50–70 (AAVWSLISATAMLAVQGGLMG). Residues 71-89 (TGWTDVFSPNIWQAVLQTQ) lie on the Periplasmic side of the membrane. Residues 90–110 (FGGIWLWQIVLALVTLIVALM) traverse the membrane as a helical segment. Over 111 to 117 (QPRNMPR) the chain is Cytoplasmic. The helical transmembrane segment at 118–138 (LLFMLTTAQFILLAGVGHATL) threads the bilayer. At 139–151 (NEGVTAKIHQTNH) the chain is on the periplasmic side. A helical transmembrane segment spans residues 152 to 172 (AIHLICAAAWFGGLLPVLWCM). Residues 173–195 (QLIKGRWRHQAIQALMRFSWCGH) lie on the Cytoplasmic side of the membrane. Residues 196–216 (FAVIGVLASGVLNALLITGFP) form a helical membrane-spanning segment. Over 217 to 222 (PTLTTY) the chain is Periplasmic. The helical transmembrane segment at 223–243 (WGQLLLLKAILVMIMVVIALA) threads the bilayer. The Cytoplasmic segment spans residues 244–260 (NRYVLVPRMRQDEDRAA). Residues 261-281 (PWFVWMTKLEWAIGAVVLVII) traverse the membrane as a helical segment. The Periplasmic portion of the chain corresponds to 282 to 290 (SLLATLEPF).

It belongs to the CopD family.

The protein localises to the cell inner membrane. In Escherichia coli (strain K12), this protein is Inner membrane protein YebZ (yebZ).